A 436-amino-acid chain; its full sequence is Prenyltransferase nscD (436 aa).

It belongs to the tryptophan dimethylallyltransferase family.

The protein operates within secondary metabolite biosynthesis. In terms of biological role, prenyltransferase; part of the gene cluster that mediates the biosynthesis of neosartoricin B, a prenylated anthracenone that probably exhibits T-cell antiproliferative activity, suggestive of a physiological role as an immunosuppressive agent. The non-reducing polyketide synthase nscA probably synthesizes and cyclizes the decaketide backbone. The hydrolase nscB then mediates the product release through hydrolysis followed by spontaneous decarboxylation. The prenyltransferase nscD catalyzes the addition of the dimethylallyl group to the aromatic C5. The FAD-dependent monooxygenase nscC is then responsible for the stereospecific hydroxylation at C2. Neosartoricin B can be converted into two additional compounds neosartoricins C and D. Neosartoricin C is a spirocyclic compound that is cyclized through the attack of C3 hydroxyl on C14, followed by dehydration. On the other hand, neosartoricin D is a further cyclized compound in which attack of C2 on C14 in neosartoricin C results in the formation of the acetal-containing dioxabicyclo-octanone ring. Both of these compounds are novel and possibly represent related metabolites of the gene cluster. In Arthroderma gypseum (strain ATCC MYA-4604 / CBS 118893) (Microsporum gypseum), this protein is Prenyltransferase nscD.